Reading from the N-terminus, the 294-residue chain is Elongation factor Ts (294 aa).

The tract at residues 80-83 is involved in Mg(2+) ion dislocation from EF-Tu; the sequence is TDFV.

It belongs to the EF-Ts family.

The protein resides in the cytoplasm. Associates with the EF-Tu.GDP complex and induces the exchange of GDP to GTP. It remains bound to the aminoacyl-tRNA.EF-Tu.GTP complex up to the GTP hydrolysis stage on the ribosome. The chain is Elongation factor Ts from Polynucleobacter necessarius subsp. necessarius (strain STIR1).